The following is a 453-amino-acid chain: Allantoinase (453 aa).

Zn(2+) is bound by residues His59, His61, Lys146, His186, His242, and Asp315. Residue Lys146 is modified to N6-carboxylysine.

The protein belongs to the metallo-dependent hydrolases superfamily. Allantoinase family. Homotetramer. Requires Zn(2+) as cofactor. Post-translationally, carboxylation allows a single lysine to coordinate two zinc ions.

The catalysed reaction is (S)-allantoin + H2O = allantoate + H(+). Its pathway is nitrogen metabolism; (S)-allantoin degradation; allantoate from (S)-allantoin: step 1/1. Catalyzes the conversion of allantoin (5-ureidohydantoin) to allantoic acid by hydrolytic cleavage of the five-member hydantoin ring. The protein is Allantoinase of Salmonella gallinarum (strain 287/91 / NCTC 13346).